The following is a 391-amino-acid chain: GDSL esterase/lipase 22 (391 aa).

Residues 1 to 29 (MMANNCNLVSVLCVILVLTLFHNPITVAG) form the signal peptide. Ser43 acts as the Nucleophile in catalysis. N-linked (GlcNAc...) asparagine glycosylation is found at Asn105, Asn165, and Asn288. Residues Asp322 and His325 contribute to the active site. Positions 372–391 (PATVHASDSSSSTSRGYEYY) are disordered.

The protein belongs to the 'GDSL' lipolytic enzyme family. Component of the PYK10 complex, at least composed of PYK10/BGLU23, BGLU21, BGLU22, JAL22, JAL23, PBP1/JAL30, PBP2/JAL31, JAL32, JAL33, JAL34, JAL35, GLL22 and GLL23.

Its subcellular location is the secreted. This Arabidopsis thaliana (Mouse-ear cress) protein is GDSL esterase/lipase 22 (GLL22).